Consider the following 367-residue polypeptide: Peptide chain release factor 1 (367 aa).

Position 238 is an N5-methylglutamine (glutamine 238).

It belongs to the prokaryotic/mitochondrial release factor family. In terms of processing, methylated by PrmC. Methylation increases the termination efficiency of RF1.

The protein resides in the cytoplasm. Functionally, peptide chain release factor 1 directs the termination of translation in response to the peptide chain termination codons UAG and UAA. In Dictyoglomus thermophilum (strain ATCC 35947 / DSM 3960 / H-6-12), this protein is Peptide chain release factor 1.